A 527-amino-acid polypeptide reads, in one-letter code: SusD-like protein P25 (527 aa).

A signal peptide spans 1–15; it reads MKIQNIIVYVFLIFS. C16 carries N-palmitoyl cysteine lipidation. Residue C16 is the site of S-diacylglycerol cysteine attachment.

Belongs to the SusD family.

The protein localises to the cell outer membrane. Functionally, polysaccharide-binding protein probably involved in ulvan degradation. Ulvan is the main polysaccharide component of the Ulvales (green seaweed) cell wall. It is composed of disaccharide building blocks comprising 3-sulfated rhamnose (Rha3S) linked to D-glucuronic acid (GlcA), L-iduronic acid (IduA), or D-xylose (Xyl). The SusD-like protein may mediate ulvan oligomer-binding before transport in the periplasm for further degradation. This Formosa agariphila (strain DSM 15362 / KCTC 12365 / LMG 23005 / KMM 3901 / M-2Alg 35-1) protein is SusD-like protein P25.